We begin with the raw amino-acid sequence, 131 residues long: M-zodatoxin-Lt8m (131 aa).

Residues 1-20 (MKYFVVALALVAAFACIAES) form the signal peptide. Residues 21 to 60 (KPAESEHELAEVEEENELADLEDAVWLEHLADLSDLEEAR) constitute a propeptide that is removed on maturation.

Belongs to the cationic peptide 06 (cytoinsectotoxin) family. In terms of tissue distribution, expressed by the venom gland.

It localises to the secreted. In terms of biological role, insecticidal, cytolytic and antimicrobial peptide. Forms voltage-dependent, ion-permeable channels in membranes. At high concentration causes cell membrane lysis. The chain is M-zodatoxin-Lt8m (cit 1-13) from Lachesana tarabaevi (Spider).